A 763-amino-acid polypeptide reads, in one-letter code: Phosphoglycerol transferase I (763 aa).

The next 4 membrane-spanning stretches (helical) occupy residues 1-21, 26-46, 77-97, and 108-128; these read MSEL…AWKA, WWFA…ITLF, ILPG…LGWI, and FGYS…SPAF.

It belongs to the OpgB family.

It localises to the cell inner membrane. The catalysed reaction is a phosphatidylglycerol + a membrane-derived-oligosaccharide D-glucose = a 1,2-diacyl-sn-glycerol + a membrane-derived-oligosaccharide 6-(glycerophospho)-D-glucose.. Its pathway is glycan metabolism; osmoregulated periplasmic glucan (OPG) biosynthesis. Its function is as follows. Transfers a phosphoglycerol residue from phosphatidylglycerol to the membrane-bound nascent glucan backbones. This Escherichia coli O127:H6 (strain E2348/69 / EPEC) protein is Phosphoglycerol transferase I.